The following is a 452-amino-acid chain: Bifunctional protein GlmU (452 aa).

Residues 1–226 form a pyrophosphorylase region; the sequence is MSLHIIILAA…LHEVEGVNNR (226 aa). UDP-N-acetyl-alpha-D-glucosamine-binding positions include 8-11, Lys22, Gln73, 78-79, 100-102, Gly136, Glu151, Asn166, and Asn224; these read LAAG, GT, and YGD. Asp102 is a Mg(2+) binding site. Asn224 contacts Mg(2+). The tract at residues 227-247 is linker; it reads IQLAALERAYQQQVAEELMLA. Residues 248-452 are N-acetyltransferase; the sequence is GATLRDPARV…IDGWTRPVKK (205 aa). Residues Arg330 and Lys348 each contribute to the UDP-N-acetyl-alpha-D-glucosamine site. The active-site Proton acceptor is the His360. Positions 363 and 374 each coordinate UDP-N-acetyl-alpha-D-glucosamine. Acetyl-CoA-binding positions include Ala377, 383–384, Ser402, Ala420, and Arg437; that span reads NY.

The protein in the N-terminal section; belongs to the N-acetylglucosamine-1-phosphate uridyltransferase family. This sequence in the C-terminal section; belongs to the transferase hexapeptide repeat family. As to quaternary structure, homotrimer. Requires Mg(2+) as cofactor.

The protein resides in the cytoplasm. The enzyme catalyses alpha-D-glucosamine 1-phosphate + acetyl-CoA = N-acetyl-alpha-D-glucosamine 1-phosphate + CoA + H(+). The catalysed reaction is N-acetyl-alpha-D-glucosamine 1-phosphate + UTP + H(+) = UDP-N-acetyl-alpha-D-glucosamine + diphosphate. It functions in the pathway nucleotide-sugar biosynthesis; UDP-N-acetyl-alpha-D-glucosamine biosynthesis; N-acetyl-alpha-D-glucosamine 1-phosphate from alpha-D-glucosamine 6-phosphate (route II): step 2/2. Its pathway is nucleotide-sugar biosynthesis; UDP-N-acetyl-alpha-D-glucosamine biosynthesis; UDP-N-acetyl-alpha-D-glucosamine from N-acetyl-alpha-D-glucosamine 1-phosphate: step 1/1. It participates in bacterial outer membrane biogenesis; LPS lipid A biosynthesis. In terms of biological role, catalyzes the last two sequential reactions in the de novo biosynthetic pathway for UDP-N-acetylglucosamine (UDP-GlcNAc). The C-terminal domain catalyzes the transfer of acetyl group from acetyl coenzyme A to glucosamine-1-phosphate (GlcN-1-P) to produce N-acetylglucosamine-1-phosphate (GlcNAc-1-P), which is converted into UDP-GlcNAc by the transfer of uridine 5-monophosphate (from uridine 5-triphosphate), a reaction catalyzed by the N-terminal domain. The polypeptide is Bifunctional protein GlmU (Hahella chejuensis (strain KCTC 2396)).